The chain runs to 158 residues: NAD(P)H-quinone oxidoreductase subunit N (158 aa).

This sequence belongs to the complex I NdhN subunit family. In terms of assembly, NDH-1 can be composed of about 15 different subunits; different subcomplexes with different compositions have been identified which probably have different functions.

It is found in the cellular thylakoid membrane. The catalysed reaction is a plastoquinone + NADH + (n+1) H(+)(in) = a plastoquinol + NAD(+) + n H(+)(out). It catalyses the reaction a plastoquinone + NADPH + (n+1) H(+)(in) = a plastoquinol + NADP(+) + n H(+)(out). NDH-1 shuttles electrons from an unknown electron donor, via FMN and iron-sulfur (Fe-S) centers, to quinones in the respiratory and/or the photosynthetic chain. The immediate electron acceptor for the enzyme in this species is believed to be plastoquinone. Couples the redox reaction to proton translocation, and thus conserves the redox energy in a proton gradient. Cyanobacterial NDH-1 also plays a role in inorganic carbon-concentration. The polypeptide is NAD(P)H-quinone oxidoreductase subunit N (Trichodesmium erythraeum (strain IMS101)).